The following is a 431-amino-acid chain: Enolase (431 aa).

Gln-164 lines the (2R)-2-phosphoglycerate pocket. Residue Glu-206 is the Proton donor of the active site. Mg(2+) is bound by residues Asp-243, Glu-288, and Asp-315. The (2R)-2-phosphoglycerate site is built by Lys-340, Arg-369, Ser-370, and Lys-391. Lys-340 (proton acceptor) is an active-site residue.

This sequence belongs to the enolase family. Mg(2+) is required as a cofactor.

Its subcellular location is the cytoplasm. It localises to the secreted. The protein localises to the cell surface. The enzyme catalyses (2R)-2-phosphoglycerate = phosphoenolpyruvate + H2O. The protein operates within carbohydrate degradation; glycolysis; pyruvate from D-glyceraldehyde 3-phosphate: step 4/5. Its function is as follows. Catalyzes the reversible conversion of 2-phosphoglycerate (2-PG) into phosphoenolpyruvate (PEP). It is essential for the degradation of carbohydrates via glycolysis. The chain is Enolase from Fervidobacterium nodosum (strain ATCC 35602 / DSM 5306 / Rt17-B1).